The sequence spans 1363 residues: Vascular endothelial growth factor receptor 3 (1363 aa).

The first 24 residues, 1–24 (MQPGAALNRRLWLCLGLLQGLANG), serve as a signal peptide directing secretion. Over 25 to 775 (YSMTPPTLNI…EGSEDKGSME (751 aa)) the chain is Extracellular. N33, N104, N166, N251, N299, and N411 each carry an N-linked (GlcNAc...) asparagine glycan. 7 consecutive Ig-like C2-type domains span residues 44–118 (GDSL…YIKA), 151–213 (KDSM…WGDQ), 230–326 (YDIQ…TEVI), 331–415 (PFIS…ISLE), 422–552 (PHIH…FYVT), 555–671 (PDGF…KYLS), and 678–764 (PRLT…ASVA). 2 disulfide bridges follow: C51–C111 and C158–C206. C252 and C310 form a disulfide bridge. 3 disulfides stabilise this stretch: C445–C534, C466–C486, and C578–C653. N515, N527, N582, N594, and N683 each carry an N-linked (GlcNAc...) asparagine glycan. C699 and C751 are oxidised to a cystine. The N-linked (GlcNAc...) asparagine glycan is linked to N758. The chain crosses the membrane as a helical span at residues 776-796 (IVILIGTGVIAVFFWVLLLLI). Topologically, residues 797 to 1363 (FCNMKRPAHA…GSTFFADSNY (567 aa)) are cytoplasmic. Phosphotyrosine; by SRC is present on residues Y830 and Y833. A Protein kinase domain is found at 845-1173 (LHLGRVLGHG…DLVEILGDLL (329 aa)). Residues 851 to 859 (LGHGAFGKV) and K879 contribute to the ATP site. D1037 (proton acceptor) is an active-site residue. The residue at position 1063 (Y1063) is a Phosphotyrosine; by autocatalysis and SRC. 4 positions are modified to phosphotyrosine; by autocatalysis: Y1068, Y1230, Y1231, and Y1265. Basic and acidic residues predominate over residues 1289-1317 (SRHRQEGSFSRKDPGQHMDISRGHPDLQG). Residues 1289–1330 (SRHRQEGSFSRKDPGQHMDISRGHPDLQGRRRRPTQGAQGGK) are disordered. Y1333 and Y1337 each carry phosphotyrosine; by autocatalysis and SRC. Y1363 is modified (phosphotyrosine; by autocatalysis).

Belongs to the protein kinase superfamily. Tyr protein kinase family. CSF-1/PDGF receptor subfamily. In terms of assembly, interacts with VEGFC and VEGFD. Monomer in the absence of bound VEGFC or VEGFD. Homodimer in the presence of bound VEGFC or VEGFD. Can also form a heterodimer with KDR. Interacts with PTPN14; the interaction is enhanced by stimulation with VEGFC. Interacts with CRK, GRB2, PTK2/FAK1, SHC1, PIK3R1 and PTPN11/SHP-2. Identified in a complex with SRC and ITGB1. Identified in a complex with SRC and ITGB1. In terms of processing, autophosphorylated on tyrosine residues upon ligand binding. Autophosphorylation occurs in trans, i.e. one subunit of the dimeric receptor phosphorylates tyrosine residues on the other subunit. Phosphorylation in response to H(2)O(2) is mediated by a process that requires SRC and PRKCD activity. Phosphorylation at Tyr-1068 is required for autophosphorylation at additional tyrosine residues. Phosphorylation at Tyr-1063 and Tyr-1337 is important for interaction with CRK and subsequent activation of MAPK8. Phosphorylation at Tyr-1230, Tyr-1231 and Tyr-1337 is important for interaction with GRB2 and subsequent activation of the AKT1 and MAPK1/ERK2 and/or MAPK3/ERK1 signaling pathways. In response to endothelial cell adhesion onto collagen, can also be phosphorylated in the absence of FLT4 kinase activity by SRC.

It localises to the cell membrane. The protein resides in the cytoplasm. Its subcellular location is the nucleus. It carries out the reaction L-tyrosyl-[protein] + ATP = O-phospho-L-tyrosyl-[protein] + ADP + H(+). Its activity is regulated as follows. Present in an inactive conformation in the absence of bound ligand. Binding of VEGFC or VEGFD leads to dimerization and activation by autophosphorylation on tyrosine residues. Its function is as follows. Tyrosine-protein kinase that acts as a cell-surface receptor for VEGFC and VEGFD, and plays an essential role in adult lymphangiogenesis and in the development of the vascular network and the cardiovascular system during embryonic development. Promotes proliferation, survival and migration of endothelial cells, and regulates angiogenic sprouting. Signaling by activated FLT4 leads to enhanced production of VEGFC, and to a lesser degree VEGFA, thereby creating a positive feedback loop that enhances FLT4 signaling. Modulates KDR signaling by forming heterodimers. Mediates activation of the MAPK1/ERK2, MAPK3/ERK1 signaling pathway, of MAPK8 and the JUN signaling pathway, and of the AKT1 signaling pathway. Phosphorylates SHC1. Mediates phosphorylation of PIK3R1, the regulatory subunit of phosphatidylinositol 3-kinase. Promotes phosphorylation of MAPK8 at 'Thr-183' and 'Tyr-185', and of AKT1 at 'Ser-473'. This is Vascular endothelial growth factor receptor 3 (Flt4) from Rattus norvegicus (Rat).